Here is a 1219-residue protein sequence, read N- to C-terminus: NHS-like protein 2 (1219 aa).

Disordered regions lie at residues 162–181 (FRSSDGAPEPTPSPRPQSAK), 288–321 (FSNFSQRDQGHSSSPTGSLARSATSDIRPGHSAP), 336–364 (FPSLTSPGLRHSSSEPGDAHQARSASDHP), 400–423 (TPSASSQGNQVSENGKNPSSGNSW), 474–591 (GLLA…ELVL), 669–741 (QGSS…SASV), 854–938 (GAEE…STAS), 979–1003 (IGLQSQEEAEKKMTKIPPPVPKKPS), 1033–1087 (LEED…DKTA), and 1121–1197 (WKET…KTTN). Polar residues predominate over residues 288-312 (FSNFSQRDQGHSSSPTGSLARSATS). Basic and acidic residues predominate over residues 352–364 (GDAHQARSASDHP). Phosphoserine is present on Ser-499. Over residues 526-545 (ASTSSEGSNSTDNIAALSTE) the composition is skewed to polar residues. Residues 549–567 (RHRRQRSKSISLKKAKKKP) show a composition bias toward basic residues. A Phosphoserine modification is found at Ser-575. Over residues 674-687 (SLASPSTSRATTPS) the composition is skewed to low complexity. Ser-690 is modified (phosphoserine). Polar residues-rich tracts occupy residues 708–729 (MSPSSGYSSQSETPTPTVSMSL) and 897–908 (TSPTMAMASRSS). Residue Ser-1048 is modified to Phosphoserine. The segment covering 1076–1087 (AEEKSLISDKTA) has biased composition (basic and acidic residues). Polar residues predominate over residues 1131–1144 (SKPSSHSPVKNTAD). Over residues 1145–1160 (SPTGEAAAAPGPSSSA) the composition is skewed to low complexity. The residue at position 1208 (Ser-1208) is a Phosphoserine.

It belongs to the NHS family.

The protein is NHS-like protein 2 of Mus musculus (Mouse).